Consider the following 644-residue polypeptide: MPEPHAVLYVTNELSHIVKNGFLPIWKLTGDESLNDLWLENGKYATDVYAYGDVSKWTIRQLRGHGFIFISTHKNVQLADIIKTVDVRIPREVARSHDMKAFENEIGRRRIRMRKGFGDALRNYAFKMAIEFHGSEAETLNDANPRLHKVYGMPEIPPLYMEYAEIGARFDDEPTDEKLVSMLDYIVYSAEEVHYVGCGDLRTLMQFKKRSPGRFRRVLWHVYDPIAPECSDPNVIVHNIMVDSKKDILKYMNFLKRVERLFIWDVSSDRSQMNDHEWETTRFAEDRLGEEIAYEMGGAFSSALIKHRIPNSKDEYHCISTYLFPQPGADADMYELRNFMRLRGYSHVDRHMHPDASVTKVVSRDVRKMVELYHGRDRGTFLKKRLFEHLHIVRKNGLLHESDEPRADLFYLTNRCNMGLEPSIYEVMKKSVIATAWVGRAPLYDYDDFALPRSTVMLNGSYRDISILDGNGAILYLMWRYPDIVKKDLTYDPAWAMNFAVSLKEPIPDPPVPDISLCRFIGLRVESSVLRVRNPTLHETADELKRMGLDLSGHLYVTLMSGAYVTDLFWWFNIILDWSAQNKEQKLRDLKRSAAEVIEWKEQMAERPWHVRNDLIRALREYKRKMGMREGASIDSWLELLRHL.

It belongs to the orbivirus VP4 family.

The protein resides in the virion. The VP4 protein is one of the five proteins (with VP1, VP3, VP6 and VP7) which form the inner capsid of the virus. This is Core protein VP4 (Segment-4) from Bluetongue virus 13 (isolate USA) (BTV 13).